The following is a 201-amino-acid chain: 3-isopropylmalate dehydratase small subunit (201 aa).

The protein belongs to the LeuD family. LeuD type 1 subfamily. Heterodimer of LeuC and LeuD.

The enzyme catalyses (2R,3S)-3-isopropylmalate = (2S)-2-isopropylmalate. It functions in the pathway amino-acid biosynthesis; L-leucine biosynthesis; L-leucine from 3-methyl-2-oxobutanoate: step 2/4. Its function is as follows. Catalyzes the isomerization between 2-isopropylmalate and 3-isopropylmalate, via the formation of 2-isopropylmaleate. The sequence is that of 3-isopropylmalate dehydratase small subunit from Shewanella woodyi (strain ATCC 51908 / MS32).